We begin with the raw amino-acid sequence, 629 residues long: tRNA uridine 5-carboxymethylaminomethyl modification enzyme MnmG (629 aa).

FAD is bound by residues 14-19, V126, and S181; that span reads GAGHAG. 273–287 contributes to the NAD(+) binding site; that stretch reads GPRYCPSIEDKVVRF. Q370 lines the FAD pocket.

This sequence belongs to the MnmG family. As to quaternary structure, homodimer. Heterotetramer of two MnmE and two MnmG subunits. FAD is required as a cofactor.

It is found in the cytoplasm. NAD-binding protein involved in the addition of a carboxymethylaminomethyl (cmnm) group at the wobble position (U34) of certain tRNAs, forming tRNA-cmnm(5)s(2)U34. In Geobacillus kaustophilus (strain HTA426), this protein is tRNA uridine 5-carboxymethylaminomethyl modification enzyme MnmG.